The chain runs to 176 residues: MTIILCGLPTSGKSSLGKALAKFLNLPFYDLDDLIVSNYSSALYSSSAEIYKAYGDQKFSECEARILETLPPEDALISLGGGTLMYEASYRAIQTRGALVFLSVELPLIYERLEKRGLPERLKEAMKTKPLSEILTERIDRMKEIADYIFPVDHVDHSSKSSLEQASQDLITLLKS.

10–15 (TSGKSS) is a binding site for ATP. S14 provides a ligand contact to Mg(2+). Substrate-binding residues include D32, G81, and R138.

This sequence belongs to the shikimate kinase family. In terms of assembly, monomer. It depends on Mg(2+) as a cofactor.

It is found in the cytoplasm. The catalysed reaction is shikimate + ATP = 3-phosphoshikimate + ADP + H(+). The protein operates within metabolic intermediate biosynthesis; chorismate biosynthesis; chorismate from D-erythrose 4-phosphate and phosphoenolpyruvate: step 5/7. Its function is as follows. Catalyzes the specific phosphorylation of the 3-hydroxyl group of shikimic acid using ATP as a cosubstrate. This is Shikimate kinase from Chlamydia pneumoniae (Chlamydophila pneumoniae).